The following is a 480-amino-acid chain: NADH-quinone oxidoreductase subunit N (480 aa).

The next 13 helical transmembrane spans lie at 5–25 (NFLC…LFLY), 40–60 (IAIV…FTMY), 69–89 (ISSQ…FLVF), 110–130 (VIML…NFVM), 162–182 (YILT…FLYG), 204–224 (LGFV…PFHL), 237–257 (VTAY…IFVL), 266–286 (LIWN…GNLF), 296–316 (FFAF…IAGT), 324–344 (IFYT…IASV), 368–388 (AFVM…AGFF), 404–424 (ILVF…LLIV), and 450–470 (MVIC…YEYI).

This sequence belongs to the complex I subunit 2 family. NDH-1 is composed of 14 different subunits. Subunits NuoA, H, J, K, L, M, N constitute the membrane sector of the complex.

The protein resides in the cell inner membrane. It carries out the reaction a quinone + NADH + 5 H(+)(in) = a quinol + NAD(+) + 4 H(+)(out). Its function is as follows. NDH-1 shuttles electrons from NADH, via FMN and iron-sulfur (Fe-S) centers, to quinones in the respiratory chain. The immediate electron acceptor for the enzyme in this species is believed to be a menaquinone. Couples the redox reaction to proton translocation (for every two electrons transferred, four hydrogen ions are translocated across the cytoplasmic membrane), and thus conserves the redox energy in a proton gradient. In Azobacteroides pseudotrichonymphae genomovar. CFP2, this protein is NADH-quinone oxidoreductase subunit N.